A 1240-amino-acid chain; its full sequence is Neurofascin (1240 aa).

The signal sequence occupies residues 1–24 (MARQQAPPWVHIALILFLLSLGGA). At 25–1110 (IEIPMDPSIQ…NQADIATQGW (1086 aa)) the chain is on the extracellular side. 6 Ig-like C2-type domains span residues 41–137 (PTIT…LQVS), 143–230 (PKEN…NPFT), 244–332 (PSFM…ISVR), 337–424 (PYWL…AFVS), 430–517 (PRML…VRLE), and 521–603 (PTRI…QDLA). Intrachain disulfides connect Cys-63-Cys-118, Cys-162-Cys-213, Cys-268-Cys-316, and Cys-358-Cys-408. An N-linked (GlcNAc...) asparagine glycan is attached at Asn-305. Residues Asn-409 and Asn-446 are each glycosylated (N-linked (GlcNAc...) asparagine). 2 disulfides stabilise this stretch: Cys-452-Cys-501 and Cys-543-Cys-592. Tyr-481 is subject to Phosphotyrosine. Asn-483 carries N-linked (GlcNAc...) asparagine glycosylation. Ser-485 is subject to Phosphoserine. 4 consecutive Fibronectin type-III domains span residues 630 to 725 (RPRD…TSGA), 727 to 823 (PESN…SGED), 827 to 923 (APRR…PNEA), and 1007 to 1099 (APDE…TAYT). Residues 710-740 (SSHPSLPSERYRTSGAPPESNPSDVKGEGTR) form a disordered region. N-linked (GlcNAc...) asparagine glycans are attached at residues Asn-752, Asn-778, Asn-866, and Asn-881. A disordered region spans residues 902 to 942 (ARTQVGSGEAATEESPAPPNEATPTAAPPTLPPTTVGTTGL). The span at 907–916 (GSGEAATEES) shows a compositional bias: low complexity. The span at 917–933 (PAPPNEATPTAAPPTLP) shows a compositional bias: pro residues. Residues 1111–1131 (FIGLMCAIALLVLILLIVCFI) traverse the membrane as a helical segment. Residues 1132 to 1240 (KRSRGGKYPV…SPVNAIYSLA (109 aa)) are Cytoplasmic-facing. The tract at residues 1141 to 1240 (VREKKDVPLG…SPVNAIYSLA (100 aa)) is disordered. A compositionally biased stretch (acidic residues) spans 1154–1165 (PKEEDGSFDYSD). Phosphoserine occurs at positions 1160, 1174, 1187, 1190, 1226, 1227, and 1231. The segment covering 1171 to 1184 (LQGSQTSLDGTIKQ) has biased composition (polar residues).

It belongs to the immunoglobulin superfamily. L1/neurofascin/NgCAM family. In terms of assembly, horseshoe-shaped homodimer. Probable constituent of a NFASC/NRCAM/ankyrin-G complex. Associates with the sodium channel beta-1 (SCN1B) and beta-3 (SCN3B) subunits. Interacts with GLDN/gliomedin. Interacts with MYOC.

The protein resides in the cell membrane. Its function is as follows. Cell adhesion, ankyrin-binding protein which may be involved in neurite extension, axonal guidance, synaptogenesis, myelination and neuron-glial cell interactions. The protein is Neurofascin (Nfasc) of Mus musculus (Mouse).